Here is a 361-residue protein sequence, read N- to C-terminus: Probable dual-specificity RNA methyltransferase RlmN (361 aa).

Glu-91 (proton acceptor) is an active-site residue. A Radical SAM core domain is found at 97 to 329 (QHYGLSVCVT…KKKGGNCVVR (233 aa)). The cysteines at positions 104 and 340 are disulfide-linked. [4Fe-4S] cluster-binding residues include Cys-111, Cys-115, and Cys-118. Residues 163–164 (GE), Ser-195, 218–220 (SLH), and Asn-296 contribute to the S-adenosyl-L-methionine site. The active-site S-methylcysteine intermediate is the Cys-340.

It belongs to the radical SAM superfamily. RlmN family. It depends on [4Fe-4S] cluster as a cofactor.

It is found in the cytoplasm. The enzyme catalyses adenosine(2503) in 23S rRNA + 2 reduced [2Fe-2S]-[ferredoxin] + 2 S-adenosyl-L-methionine = 2-methyladenosine(2503) in 23S rRNA + 5'-deoxyadenosine + L-methionine + 2 oxidized [2Fe-2S]-[ferredoxin] + S-adenosyl-L-homocysteine. It carries out the reaction adenosine(37) in tRNA + 2 reduced [2Fe-2S]-[ferredoxin] + 2 S-adenosyl-L-methionine = 2-methyladenosine(37) in tRNA + 5'-deoxyadenosine + L-methionine + 2 oxidized [2Fe-2S]-[ferredoxin] + S-adenosyl-L-homocysteine. Specifically methylates position 2 of adenine 2503 in 23S rRNA and position 2 of adenine 37 in tRNAs. The polypeptide is Probable dual-specificity RNA methyltransferase RlmN (Streptococcus pneumoniae (strain P1031)).